A 427-amino-acid chain; its full sequence is Adenylosuccinate synthetase (427 aa).

GTP is bound by residues 12-18 (GDEGKGK) and 40-42 (GHT). Asp13 functions as the Proton acceptor in the catalytic mechanism. Mg(2+) is bound by residues Asp13 and Gly40. IMP-binding positions include 13 to 16 (DEGK), 38 to 41 (NAGH), Thr128, Arg142, Gln223, Thr238, and Arg302. Residue His41 is the Proton donor of the active site. Residue 298–304 (VTTGRAR) participates in substrate binding. Residues Arg304, 330 to 332 (KLD), and 412 to 414 (GVG) each bind GTP.

It belongs to the adenylosuccinate synthetase family. In terms of assembly, homodimer. It depends on Mg(2+) as a cofactor.

The protein localises to the cytoplasm. It carries out the reaction IMP + L-aspartate + GTP = N(6)-(1,2-dicarboxyethyl)-AMP + GDP + phosphate + 2 H(+). The protein operates within purine metabolism; AMP biosynthesis via de novo pathway; AMP from IMP: step 1/2. Plays an important role in the de novo pathway of purine nucleotide biosynthesis. Catalyzes the first committed step in the biosynthesis of AMP from IMP. In Frankia alni (strain DSM 45986 / CECT 9034 / ACN14a), this protein is Adenylosuccinate synthetase.